We begin with the raw amino-acid sequence, 177 residues long: Large ribosomal subunit protein uL6 (177 aa).

Belongs to the universal ribosomal protein uL6 family. In terms of assembly, part of the 50S ribosomal subunit.

Functionally, this protein binds to the 23S rRNA, and is important in its secondary structure. It is located near the subunit interface in the base of the L7/L12 stalk, and near the tRNA binding site of the peptidyltransferase center. This is Large ribosomal subunit protein uL6 from Alkalilimnicola ehrlichii (strain ATCC BAA-1101 / DSM 17681 / MLHE-1).